The primary structure comprises 169 residues: Peptide deformylase (169 aa).

Fe cation contacts are provided by Cys-93 and His-135. The active site involves Glu-136. Fe cation is bound at residue His-139.

Belongs to the polypeptide deformylase family. The cofactor is Fe(2+).

It carries out the reaction N-terminal N-formyl-L-methionyl-[peptide] + H2O = N-terminal L-methionyl-[peptide] + formate. Removes the formyl group from the N-terminal Met of newly synthesized proteins. Requires at least a dipeptide for an efficient rate of reaction. N-terminal L-methionine is a prerequisite for activity but the enzyme has broad specificity at other positions. The chain is Peptide deformylase from Aquifex aeolicus (strain VF5).